Here is a 391-residue protein sequence, read N- to C-terminus: Probable sugar efflux transporter (391 aa).

12 helical membrane-spanning segments follow: residues 16–36, 51–71, 82–102, 110–130, 138–158, 170–190, 210–230, 247–267, 277–297, 300–320, 338–358, and 361–381; these read VFVFSLSAFIFNTTEFVPVAL, VGLMITAYAWVVSLGSLPLML, LLFLFALFIFSHILSALAWNF, MGIAFAHSIFWSITASLVIRV, QALGLLALGSSLAMILGLPLG, TFGVIGGVATLIMLLMWKLLP, PLLVGIYLLVIMVISGHFTTY, ITTLMLFVFGLAGVVGSFLFG, FIAFAMVLVICPQLLLFVFKN, WVIFLQIFLWGIGITSLTIAL, IFSGSYNVGIGSGALFGSIVI, and LGLEYIGFVGGALGLLALFWL.

This sequence belongs to the major facilitator superfamily. SotB (TC 2.A.1.2) family.

The protein localises to the cell inner membrane. Its function is as follows. Involved in the efflux of sugars. The physiological role may be the reduction of the intracellular concentration of toxic sugars or sugar metabolites. This chain is Probable sugar efflux transporter, found in Helicobacter pylori (strain J99 / ATCC 700824) (Campylobacter pylori J99).